We begin with the raw amino-acid sequence, 454 residues long: Bifunctional protein GlmU (454 aa).

The pyrophosphorylase stretch occupies residues Met-1–Pro-228. UDP-N-acetyl-alpha-D-glucosamine-binding positions include Leu-10 to Gly-13, Lys-24, Gln-76, Gly-81 to Thr-82, Tyr-103 to Asp-105, Gly-138, Glu-153, Asn-168, and Asn-226. Residue Asp-105 participates in Mg(2+) binding. A Mg(2+)-binding site is contributed by Asn-226. Residues Trp-229–Gln-249 are linker. Residues Gly-250–Lys-454 form an N-acetyltransferase region. UDP-N-acetyl-alpha-D-glucosamine is bound by residues Arg-332 and Lys-350. The active-site Proton acceptor is the His-362. Residues Tyr-365 and Asn-376 each coordinate UDP-N-acetyl-alpha-D-glucosamine. Acetyl-CoA contacts are provided by residues Ala-379, Asn-385–Tyr-386, Ser-404, Ala-422, and Arg-439.

The protein in the N-terminal section; belongs to the N-acetylglucosamine-1-phosphate uridyltransferase family. This sequence in the C-terminal section; belongs to the transferase hexapeptide repeat family. In terms of assembly, homotrimer. Requires Mg(2+) as cofactor.

The protein resides in the cytoplasm. The enzyme catalyses alpha-D-glucosamine 1-phosphate + acetyl-CoA = N-acetyl-alpha-D-glucosamine 1-phosphate + CoA + H(+). The catalysed reaction is N-acetyl-alpha-D-glucosamine 1-phosphate + UTP + H(+) = UDP-N-acetyl-alpha-D-glucosamine + diphosphate. It functions in the pathway nucleotide-sugar biosynthesis; UDP-N-acetyl-alpha-D-glucosamine biosynthesis; N-acetyl-alpha-D-glucosamine 1-phosphate from alpha-D-glucosamine 6-phosphate (route II): step 2/2. It participates in nucleotide-sugar biosynthesis; UDP-N-acetyl-alpha-D-glucosamine biosynthesis; UDP-N-acetyl-alpha-D-glucosamine from N-acetyl-alpha-D-glucosamine 1-phosphate: step 1/1. The protein operates within bacterial outer membrane biogenesis; LPS lipid A biosynthesis. In terms of biological role, catalyzes the last two sequential reactions in the de novo biosynthetic pathway for UDP-N-acetylglucosamine (UDP-GlcNAc). The C-terminal domain catalyzes the transfer of acetyl group from acetyl coenzyme A to glucosamine-1-phosphate (GlcN-1-P) to produce N-acetylglucosamine-1-phosphate (GlcNAc-1-P), which is converted into UDP-GlcNAc by the transfer of uridine 5-monophosphate (from uridine 5-triphosphate), a reaction catalyzed by the N-terminal domain. The polypeptide is Bifunctional protein GlmU (Xanthomonas campestris pv. campestris (strain B100)).